Here is a 610-residue protein sequence, read N- to C-terminus: tRNA uridine 5-carboxymethylaminomethyl modification enzyme MnmG (610 aa).

14–19 (GAGHAG) lines the FAD pocket. 274–288 (GPRYCPSIEDKIVKF) contacts NAD(+).

The protein belongs to the MnmG family. Homodimer. Heterotetramer of two MnmE and two MnmG subunits. FAD is required as a cofactor.

The protein resides in the cytoplasm. In terms of biological role, NAD-binding protein involved in the addition of a carboxymethylaminomethyl (cmnm) group at the wobble position (U34) of certain tRNAs, forming tRNA-cmnm(5)s(2)U34. This chain is tRNA uridine 5-carboxymethylaminomethyl modification enzyme MnmG, found in Chlamydia trachomatis serovar A (strain ATCC VR-571B / DSM 19440 / HAR-13).